We begin with the raw amino-acid sequence, 349 residues long: Isopentenyl-diphosphate delta-isomerase (349 aa).

Position 6 to 7 (6 to 7 (RK)) interacts with substrate. FMN-binding positions include 62 to 64 (AMT), Ser-93, and Asn-122. Position 152 (Gln-152) interacts with substrate. Glu-153 provides a ligand contact to Mg(2+). Residues Lys-184, Thr-214, 258–259 (GG), and 280–281 (AG) each bind FMN.

Belongs to the IPP isomerase type 2 family. Homooctamer. Dimer of tetramers. It depends on FMN as a cofactor. NADPH serves as cofactor. Mg(2+) is required as a cofactor.

It is found in the cytoplasm. The catalysed reaction is isopentenyl diphosphate = dimethylallyl diphosphate. In terms of biological role, involved in the biosynthesis of isoprenoids. Catalyzes the 1,3-allylic rearrangement of the homoallylic substrate isopentenyl (IPP) to its allylic isomer, dimethylallyl diphosphate (DMAPP). The protein is Isopentenyl-diphosphate delta-isomerase of Bacillus cereus (strain ZK / E33L).